Here is an 883-residue protein sequence, read N- to C-terminus: Translation initiation factor IF-2 (883 aa).

Disordered regions lie at residues 53–90 and 171–294; these read RSHG…GRSK and EEAA…FERP. Residues 81 to 90 are compositionally biased toward polar residues; that stretch reads EVTVNSGRSK. Low complexity predominate over residues 172 to 185; that stretch reads EAAAAAKAAEALAA. The span at 221-238 shows a compositional bias: basic and acidic residues; the sequence is RSDDRNNRSAPRNERGPG. Over residues 256–265 the composition is skewed to low complexity; that stretch reads GNSNNSNNRG. Residues 382–551 enclose the tr-type G domain; it reads QRPPVVTIMG…SVQAELLELK (170 aa). Positions 391-398 are G1; that stretch reads GHVDHGKT. 391–398 serves as a coordination point for GTP; sequence GHVDHGKT. The G2 stretch occupies residues 416–420; the sequence is GITQH. Residues 437-440 form a G3 region; that stretch reads DTPG. GTP contacts are provided by residues 437-441 and 491-494; these read DTPGH and NKID. The segment at 491–494 is G4; it reads NKID. Residues 527 to 529 form a G5 region; the sequence is SAK.

Belongs to the TRAFAC class translation factor GTPase superfamily. Classic translation factor GTPase family. IF-2 subfamily.

The protein localises to the cytoplasm. One of the essential components for the initiation of protein synthesis. Protects formylmethionyl-tRNA from spontaneous hydrolysis and promotes its binding to the 30S ribosomal subunits. Also involved in the hydrolysis of GTP during the formation of the 70S ribosomal complex. In Stenotrophomonas maltophilia (strain R551-3), this protein is Translation initiation factor IF-2.